Consider the following 182-residue polypeptide: UPF0301 protein NGK_1355 (182 aa).

The protein belongs to the UPF0301 (AlgH) family.

The protein is UPF0301 protein NGK_1355 of Neisseria gonorrhoeae (strain NCCP11945).